The primary structure comprises 545 residues: Thermosome subunit alpha (545 aa).

Belongs to the TCP-1 chaperonin family. Forms a Heterooligomeric complex of two stacked eight-membered rings.

In terms of biological role, molecular chaperone; binds unfolded polypeptides in vitro, and has a weak ATPase activity. In Archaeoglobus fulgidus (strain ATCC 49558 / DSM 4304 / JCM 9628 / NBRC 100126 / VC-16), this protein is Thermosome subunit alpha (thsA).